The following is a 177-amino-acid chain: MSRIGKKPVQVPAGVTANVDGQKVTAKGPKGELFFVANDEVSVKLENNTVVVQPLNESKDARAKWGMSRTMIENILKGVKDGYERKLEINGVGYRASMQGKNLQLALGFSHDVVYQTPEGITIAVPKPTEIVVSGINKQQVGQVAAEIREYRGPEPYKGKGVKYAEERIVRKEGKKK.

It belongs to the universal ribosomal protein uL6 family. In terms of assembly, part of the 50S ribosomal subunit.

This protein binds to the 23S rRNA, and is important in its secondary structure. It is located near the subunit interface in the base of the L7/L12 stalk, and near the tRNA binding site of the peptidyltransferase center. The protein is Large ribosomal subunit protein uL6 of Rhizobium meliloti (strain 1021) (Ensifer meliloti).